The chain runs to 256 residues: 1-(5-phosphoribosyl)-5-[(5-phosphoribosylamino)methylideneamino] imidazole-4-carboxamide isomerase (256 aa).

The active-site Proton acceptor is the Asp-8. Asp-129 (proton donor) is an active-site residue.

Belongs to the HisA/HisF family.

The protein resides in the cytoplasm. The catalysed reaction is 1-(5-phospho-beta-D-ribosyl)-5-[(5-phospho-beta-D-ribosylamino)methylideneamino]imidazole-4-carboxamide = 5-[(5-phospho-1-deoxy-D-ribulos-1-ylimino)methylamino]-1-(5-phospho-beta-D-ribosyl)imidazole-4-carboxamide. Its pathway is amino-acid biosynthesis; L-histidine biosynthesis; L-histidine from 5-phospho-alpha-D-ribose 1-diphosphate: step 4/9. This chain is 1-(5-phosphoribosyl)-5-[(5-phosphoribosylamino)methylideneamino] imidazole-4-carboxamide isomerase, found in Prochlorococcus marinus (strain NATL1A).